A 430-amino-acid polypeptide reads, in one-letter code: MDRIRIVGGNKLAGSIPISGAKNAALPLMIASLLTDDTLTLENVPHLADVEQLIRILGNHGVDYSVNGRREKQNEGYSRTINFSARNIVDTTAPYELVSKMRASFWVIGPLLARMGEAKVSLPGGCAIGTRPVDLFLEGLQALGADLDVDTGYVIAKTKNGRLVGNRYVFPKVSVGATHVLMMAASLAKGETVLENAACEPEIVNLAECLNAMGARISGAGTPTITIDGVESLSGARVRVIPDRIETGTYAMAVAMTGGDVVLEGARPELLQTALDVISQTGAEITQTNSGIRVKRNGAGISPVDVTTAPFPAFPTDLQAQFMGLMTMAKGKSRITETIFENRFMHVQELARLGAHITLSGQTAIVDGVAKLKGAPVMATDLRASVSLVIAGLAAEGETTVNRVYHLDRGFERLEEKLSNCGAVIERISA.

Lysine 22–asparagine 23 lines the phosphoenolpyruvate pocket. Arginine 102 is a UDP-N-acetyl-alpha-D-glucosamine binding site. The active-site Proton donor is the cysteine 126. At cysteine 126 the chain carries 2-(S-cysteinyl)pyruvic acid O-phosphothioketal. UDP-N-acetyl-alpha-D-glucosamine is bound by residues arginine 131–leucine 135, lysine 172–valine 175, aspartate 317, and isoleucine 339.

Belongs to the EPSP synthase family. MurA subfamily.

The protein localises to the cytoplasm. It carries out the reaction phosphoenolpyruvate + UDP-N-acetyl-alpha-D-glucosamine = UDP-N-acetyl-3-O-(1-carboxyvinyl)-alpha-D-glucosamine + phosphate. It functions in the pathway cell wall biogenesis; peptidoglycan biosynthesis. Its function is as follows. Cell wall formation. Adds enolpyruvyl to UDP-N-acetylglucosamine. This chain is UDP-N-acetylglucosamine 1-carboxyvinyltransferase 1, found in Mesorhizobium japonicum (strain LMG 29417 / CECT 9101 / MAFF 303099) (Mesorhizobium loti (strain MAFF 303099)).